An 88-amino-acid chain; its full sequence is Small ribosomal subunit protein bS16c (88 aa).

This sequence belongs to the bacterial ribosomal protein bS16 family.

Its subcellular location is the plastid. The protein localises to the chloroplast. The sequence is that of Small ribosomal subunit protein bS16c from Lactuca sativa (Garden lettuce).